The chain runs to 774 residues: Fe(3+) dicitrate transport protein FecA (774 aa).

The signal sequence occupies residues 1–33 (MTPLRVFRKTTPLVNTIRLSLLPLAGLSFSAFA). The TonB box signature appears at 56 to 63 (FTLSVDAS). Positions 129-250 (DVFEHAGARD…VGGVVNFVTR (122 aa)) constitute a TBDR plug domain. The TBDR beta-barrel domain occupies 255–774 (DFGIEAGVEG…TLYMQGSLKF (520 aa)). The TonB C-terminal box signature appears at 757–774 (GIYAGQPRTLYMQGSLKF).

Belongs to the TonB-dependent receptor family. Interacts (via periplasmic N-terminus) with FecR (via periplasmic C-terminus).

The protein localises to the cell outer membrane. Its function is as follows. FecA is the outer membrane receptor protein in the Fe(3+) dicitrate transport system. This chain is Fe(3+) dicitrate transport protein FecA (fecA), found in Escherichia coli (strain K12).